Here is a 99-residue protein sequence, read N- to C-terminus: Complement inhibitor RaCI7 (99 aa).

Positions 1-24 (MAALNGLVLLLLTISAMFISECYS) are cleaved as a signal peptide. 3 disulfides stabilise this stretch: Cys-37/Cys-61, Cys-42/Cys-63, and Cys-57/Cys-78.

This sequence belongs to the RaCI family. Expressed in salivary glands.

It is found in the secreted. Functionally, complement inhibitor. Prevents complement-mediated C5 activation by binding to C5. Binds C5 at a different binding site than the other tick complement inhibitors OmCI and CirpT1, and the drug eculizumab. This is Complement inhibitor RaCI7 from Dermacentor andersoni (Rocky mountain wood tick).